The chain runs to 208 residues: Mediator of RNA polymerase II transcription subunit 18 (208 aa).

Belongs to the Mediator complex subunit 18 family. As to quaternary structure, component of the Mediator complex.

It localises to the nucleus. Component of the Mediator complex, a coactivator involved in the regulated transcription of nearly all RNA polymerase II-dependent genes. Mediator functions as a bridge to convey information from gene-specific regulatory proteins to the basal RNA polymerase II transcription machinery. Mediator is recruited to promoters by direct interactions with regulatory proteins and serves as a scaffold for the assembly of a functional preinitiation complex with RNA polymerase II and the general transcription factors. This is Mediator of RNA polymerase II transcription subunit 18 (med18) from Xenopus tropicalis (Western clawed frog).